An 88-amino-acid polypeptide reads, in one-letter code: UPF0223 protein RBAM_014500 (88 aa).

The protein belongs to the UPF0223 family.

The protein is UPF0223 protein RBAM_014500 of Bacillus velezensis (strain DSM 23117 / BGSC 10A6 / LMG 26770 / FZB42) (Bacillus amyloliquefaciens subsp. plantarum).